The sequence spans 352 residues: DNA polymerase IV (352 aa).

In terms of domain architecture, UmuC spans 4–185 (IIHVDMDCFY…LPLEKIPGVG (182 aa)). Aspartate 8 and aspartate 103 together coordinate Mg(2+). Glutamate 104 is an active-site residue.

This sequence belongs to the DNA polymerase type-Y family. Monomer. Mg(2+) is required as a cofactor.

The protein localises to the cytoplasm. The catalysed reaction is DNA(n) + a 2'-deoxyribonucleoside 5'-triphosphate = DNA(n+1) + diphosphate. In terms of biological role, poorly processive, error-prone DNA polymerase involved in untargeted mutagenesis. Copies undamaged DNA at stalled replication forks, which arise in vivo from mismatched or misaligned primer ends. These misaligned primers can be extended by PolIV. Exhibits no 3'-5' exonuclease (proofreading) activity. May be involved in translesional synthesis, in conjunction with the beta clamp from PolIII. This chain is DNA polymerase IV, found in Pectobacterium atrosepticum (strain SCRI 1043 / ATCC BAA-672) (Erwinia carotovora subsp. atroseptica).